Reading from the N-terminus, the 264-residue chain is Undecaprenyl-diphosphatase (264 aa).

8 helical membrane passes run 7–27 (IVLA…SAHL), 41–61 (LIFD…YYQA), 89–109 (VLLG…FVAV), 114–134 (IEII…ASWF), 144–164 (TISW…LIPG), 186–206 (IQFS…LMLI), 219–239 (LLVL…IFVI), and 244–264 (MVGM…LFFL).

Belongs to the UppP family.

The protein localises to the cell inner membrane. The enzyme catalyses di-trans,octa-cis-undecaprenyl diphosphate + H2O = di-trans,octa-cis-undecaprenyl phosphate + phosphate + H(+). In terms of biological role, catalyzes the dephosphorylation of undecaprenyl diphosphate (UPP). Confers resistance to bacitracin. In Vesicomyosocius okutanii subsp. Calyptogena okutanii (strain HA), this protein is Undecaprenyl-diphosphatase.